A 330-amino-acid chain; its full sequence is 4-hydroxythreonine-4-phosphate dehydrogenase (330 aa).

Residues His-136 and Thr-137 each contribute to the substrate site. Positions 166, 211, and 266 each coordinate a divalent metal cation. The substrate site is built by Lys-274, Asn-283, and Arg-292.

Belongs to the PdxA family. Homodimer. Requires Zn(2+) as cofactor. Mg(2+) serves as cofactor. The cofactor is Co(2+).

It is found in the cytoplasm. The enzyme catalyses 4-(phosphooxy)-L-threonine + NAD(+) = 3-amino-2-oxopropyl phosphate + CO2 + NADH. It functions in the pathway cofactor biosynthesis; pyridoxine 5'-phosphate biosynthesis; pyridoxine 5'-phosphate from D-erythrose 4-phosphate: step 4/5. Functionally, catalyzes the NAD(P)-dependent oxidation of 4-(phosphooxy)-L-threonine (HTP) into 2-amino-3-oxo-4-(phosphooxy)butyric acid which spontaneously decarboxylates to form 3-amino-2-oxopropyl phosphate (AHAP). The sequence is that of 4-hydroxythreonine-4-phosphate dehydrogenase from Sodalis glossinidius (strain morsitans).